The sequence spans 85 residues: Small ribosomal subunit protein uS17 (85 aa).

Belongs to the universal ribosomal protein uS17 family. In terms of assembly, part of the 30S ribosomal subunit.

In terms of biological role, one of the primary rRNA binding proteins, it binds specifically to the 5'-end of 16S ribosomal RNA. The sequence is that of Small ribosomal subunit protein uS17 from Ruminiclostridium cellulolyticum (strain ATCC 35319 / DSM 5812 / JCM 6584 / H10) (Clostridium cellulolyticum).